The primary structure comprises 266 residues: Ciliary microtubule inner protein 4 (266 aa).

Polar residues-rich tracts occupy residues 1-15 and 24-38; these read MELS…LTRT and QDMN…SLDN. The disordered stretch occupies residues 1 to 124; sequence MELSHRQGTT…SPEQRTVPLS (124 aa). Residues 47–63 are compositionally biased toward low complexity; that stretch reads LSQSPLGSSLGQGYLET. The span at 81 to 102 shows a compositional bias: basic and acidic residues; it reads HPEDLKKGASRSSSRDARETFR.

As to expression, only detected in testis, in the spermatids and sperm within the seminiferous tubules (at protein level).

The protein localises to the cytoplasmic vesicle. It localises to the secretory vesicle. Its subcellular location is the acrosome. The protein resides in the cell projection. It is found in the cilium. The protein localises to the flagellum. Seems to be associated with spermiogenesis but is not essential for sperm development and male fertility. The protein is Ciliary microtubule inner protein 4 (Cimip4) of Mus musculus (Mouse).